We begin with the raw amino-acid sequence, 193 residues long: Cerebellin-1 (193 aa).

The signal sequence occupies residues 1–21 (MLGVLELLLLGAAWLAGPARG). Residue N23 is glycosylated (N-linked (GlcNAc...) asparagine). An essential for interaction with NRXN1 and linker of two C1q trimers into disulfide-linked hexamers region spans residues 34–38 (CLVVC). The C1q domain maps to 57–193 (SGSAKVAFSA…TFSGFLVFPL (137 aa)). A necessary for interaction with CBLN3, and homotrimerization region spans residues 62–193 (VAFSAIRSTN…TFSGFLVFPL (132 aa)). N79 is a glycosylation site (N-linked (GlcNAc...) asparagine). The interval 122-147 (YNRQTIQVSLMLNGWPVISAFAGDQD) is essential for interaction with GRID2.

As to quaternary structure, homohexamer; disulfide-linked homotrimers. The trimers associate via N-terminal cysteine residues to form disulfide-linked hexamers. May form oligomers with CBLN2, CBLN3 AND CBLN4 prior to secretion. Once secreted, does not interact with other CBLN family members. Interacts with GRID1. Interacts with NRXN1 and NRXN2 long (alpha) and short (beta) isoforms produced by alternative promoter usage. Competes with NLGN1 for NRXN1-binding. Weakly interacts with NRXN3 short isoform and not at all with NRXN3 long isoform. Interacts (via C1q domain) with GRID2; GRID2-binding is calcium-independent; CBLN1 hexamers anchor GRID2 N-terminal domain dimers to monomeric NRXN1 isoform beta; promotes synaptogenesis and mediates the D-Serine-dependent long term depression signals and AMPA receptor endocytosis. Interacts with OTOL1. In terms of processing, the proteolytic processing to yield cerebellin seems to occur either prior to the secretion by presynaptic neurons and subsequent oligomerization or in some other location after release of the mature protein. Sialoglycoprotein. In terms of tissue distribution, in the Purkinje cells postsynaptic structures. In the cerebellum, cerebellin is much less abundant than [des-Ser1]-cerebellin.

Its subcellular location is the secreted. The protein resides in the postsynaptic cell membrane. Its function is as follows. Required for synapse integrity and synaptic plasticity. During cerebellar synapse formation, essential for the matching and maintenance of pre- and post-synaptic elements at parallel fiber-Purkinje cell synapses, the establishment of the proper pattern of climbing fiber-Purkinje cell innervation, and induction of long-term depression at parallel fiber-Purkinje cell synapses. Plays a role as a synaptic organizer that acts bidirectionally on both pre- and post-synaptic components. On the one hand induces accumulation of synaptic vesicles in the pre-synaptic part by binding with NRXN1 and in other hand induces clustering of GRID2 and its associated proteins at the post-synaptic site through association of GRID2. NRXN1-CBLN1-GRID2 complex directly induces parallel fiber protrusions that encapsulate spines of Purkinje cells leading to accumulation of GRID2 and synaptic vesicles. Required for CBLN3 export from the endoplasmic reticulum and secretion. NRXN1-CBLN1-GRID2 complex mediates the D-Serine-dependent long term depression signals and AMPA receptor endocytosis. Essential for long-term maintenance but not establishment of excitatory synapses. Inhibits the formation and function of inhibitory GABAergic synapses in cerebellar Purkinje cells. The cerebellin peptide exerts neuromodulatory functions. Directly stimulates norepinephrine release via the adenylate cyclase/PKA-dependent signaling pathway; and indirectly enhances adrenocortical secretion in vivo, through a paracrine mechanism involving medullary catecholamine release. In Homo sapiens (Human), this protein is Cerebellin-1 (CBLN1).